The sequence spans 432 residues: uncharacterized protein (432 aa).

The next 13 helical transmembrane spans lie at 7-27, 29-49, 68-88, 124-144, 156-176, 196-216, 241-261, 266-286, 291-311, 326-346, 358-378, 379-399, and 412-432; these read FIGL…PDIY, GIVI…PLPV, EALT…FMLA, FLSM…IALG, FLLL…IIGS, VGFP…YIYF, LVIF…SEIF, FDSV…LVEV, KIDW…GVIV, ILGN…TIIL, IIVP…LILA, VGMS…NAIV, and IGMI…ILYL.

The protein belongs to the CitM (TC 2.A.11) transporter family.

Its subcellular location is the cell membrane. This is an uncharacterized protein from Methanocaldococcus jannaschii (strain ATCC 43067 / DSM 2661 / JAL-1 / JCM 10045 / NBRC 100440) (Methanococcus jannaschii).